Reading from the N-terminus, the 191-residue chain is RNA polymerase sigma factor CnrH (191 aa).

The Polymerase core binding signature appears at 49–62 (DVVQDTFVAAWHAL). The segment at residues 156-175 (QPEAAAVLGLSVKAVEGRIG) is a DNA-binding region (H-T-H motif).

It belongs to the sigma-70 factor family. ECF subfamily.

Functionally, sigma factors are initiation factors that promote the attachment of RNA polymerase to specific initiation sites and are then released. This sigma factor regulates the genes for a membrane-located efflux system that confers resistance to nickel and cobalt. CnrH alone is able to activate CNR expression, while both CnrY and CrnX are needed for nickel induction of cnrH. Binds DNA in an RNA polymerase-dependent fashion. CnrH may be controlled by a CnrYX transmembrane anti-sigma factor complex which binds CnrH in the absence of Ni(2+). If Ni(2+) appears in the periplasm, it may be bound by CnrR (CnrX); the signal then would be transmitted by CnrY into the cytoplasm and CnrH would be released. In Cupriavidus metallidurans (strain ATCC 43123 / DSM 2839 / NBRC 102507 / CH34) (Ralstonia metallidurans), this protein is RNA polymerase sigma factor CnrH (cnrH).